Reading from the N-terminus, the 420-residue chain is Ribosome biogenesis protein WDR12 homolog (420 aa).

Residues 10–92 (VQVHLKTKQE…EDAIEIEYVE (83 aa)) are ubiquitin-like (UBL) domain. WD repeat units lie at residues 104–142 (LHDDWVSAVKASGKWILSGCYDNTLNLWTNKGKHILTIS), 143–185 (GHTA…NSVE), 192–231 (GHERGVDSVSVSPDGLRFATGSWDTMLKVWSAEVEDAVEG), 250–288 (GHRESVSAVQWMDASTLLTGSWDHTLKVWDLSLEGIKTE), 290–329 (STNKSIFDASYSKLNRLILTASADKNLRLYDPRTNQGSVV), 335–375 (GHNA…APLY), and 379–417 (GHGEKVLDIDWSNPKYIVSGGVDNTVRVFKSRKALADDA).

This sequence belongs to the WD repeat WDR12/YTM1 family.

It localises to the nucleus. The protein resides in the nucleolus. The protein localises to the nucleoplasm. Its function is as follows. Required for maturation of ribosomal RNAs and formation of the large ribosomal subunit. This is Ribosome biogenesis protein WDR12 homolog from Drosophila yakuba (Fruit fly).